A 190-amino-acid polypeptide reads, in one-letter code: Endoribonuclease YbeY (190 aa).

A disordered region spans residues 1–25; that stretch reads MSQPRPGHRPDCNGADPDSNFASMT. Positions 147, 151, and 157 each coordinate Zn(2+).

The protein belongs to the endoribonuclease YbeY family. Requires Zn(2+) as cofactor.

It is found in the cytoplasm. Single strand-specific metallo-endoribonuclease involved in late-stage 70S ribosome quality control and in maturation of the 3' terminus of the 16S rRNA. The sequence is that of Endoribonuclease YbeY from Rhodopseudomonas palustris (strain ATCC BAA-98 / CGA009).